We begin with the raw amino-acid sequence, 437 residues long: Cobyrinate a,c-diamide synthase (437 aa).

One can recognise a GATase cobBQ-type domain in the interval 241–430; it reads KIAVAKDEAF…AHVHFFGNLD (190 aa). The Nucleophile role is filled by C323.

This sequence belongs to the CobB/CbiA family. It depends on Mg(2+) as a cofactor.

The enzyme catalyses cob(II)yrinate + 2 L-glutamine + 2 ATP + 2 H2O = cob(II)yrinate a,c diamide + 2 L-glutamate + 2 ADP + 2 phosphate + 2 H(+). It participates in cofactor biosynthesis; adenosylcobalamin biosynthesis; cob(II)yrinate a,c-diamide from sirohydrochlorin (anaerobic route): step 10/10. Catalyzes the ATP-dependent amidation of the two carboxylate groups at positions a and c of cobyrinate, using either L-glutamine or ammonia as the nitrogen source. The protein is Cobyrinate a,c-diamide synthase of Clostridium acetobutylicum (strain ATCC 824 / DSM 792 / JCM 1419 / IAM 19013 / LMG 5710 / NBRC 13948 / NRRL B-527 / VKM B-1787 / 2291 / W).